Consider the following 508-residue polypeptide: O-acetyltransferase pigM (508 aa).

A disordered region spans residues 166–188 (TPAPDERGKISPSLEDAAGSPRT).

It functions in the pathway secondary metabolite biosynthesis. Its function is as follows. O-acetyltransferase; part of the gene cluster that mediates the biosynthesis of azaphilone pigments (MonAzPs), a complex mixture of compounds with a common azaphilone skeleton very widely used as food colorants. PigM and pigO are involved in the elimination of the omega-1 alcohol with pigM acting as an O-acetyltransferase that synthesizes the O-11 acetyl intermediate whereas pigO eliminates acetic acid to yield an intermediate with a C10(11) double bond. The first step of the pathway is performed by the nrPKS pigA that forms the hexaketide precursor from successive condensations of five malonyl-CoA units, with a simple acetyl-CoA starter unit. The role of esterase pigG is not clear, but it may play at most a supplementary role in the formation of the benzaldehyde produced by the pigA nrPKS. This very reactive benzaldehyde is intercepted by the pigC ketoreductase that to provide the first stable enzyme-free MonAzPs intermediate, 6-(4-hydroxy-2-oxopentyl)-3-methyl-2,4-dioxocyclohexane carbaldehyde, also known as M7PKS-1. The FAD-dependent monooxygenase pigN hydroxylates M7PKS-1 at C-4, which triggers the formation of the pyran ring. PigJ, pigK and pigD are involved in the acetylation of the pyran ring. PigJ and pigK form the two subunits of a dedicated fungal FAS that produces the side chain fatty acyl moiety of MonAzPs and pigD transfers the fatty acyl chain to the C-4 alcohol. PigM and pigO are involved in the elimination of the omega-1 alcohol. PigM acts as an O-acetyltransferase that synthesizes the putative O-11 acetyl intermediate whereas pigO eliminates acetic acid to yield an intermediate with a C10(11) double bond. The dehydration of the C-11 alcohol followed by the reduction of the C6(7) double bond by the NAD(P)H-dependent oxidoreductase pigE increases the electrophilicity of the C-5 ketone of the resulting acyl benzopyran. This in turn sets up the C-5 ketone for an intramolecular Knoevenagel aldol condensation with the C-20 enol of the side chain. This condensation affords the characteristic linear tricyclic carbon skeletons of the yellow pigments that serve as the common precursors for the classical yellow pigments monascin and ankaflavin, orange pigments rubopunctatin and monascorubrin, and red pigments ribropunctamine and monascorubramine. The FAD-dependent oxidoreductase pigF is especially invoved in the biosynthesis of orange and red pigments via desaturation of C6(7). The sequence is that of O-acetyltransferase pigM from Monascus ruber (Mold).